Here is a 394-residue protein sequence, read N- to C-terminus: Flavohemoprotein (394 aa).

A Globin domain is found at 1–136 (MLSENTINIV…LANVFIQREE (136 aa)). H85 contributes to the heme b binding site. Residues Y95 and E135 each act as charge relay system in the active site. The interval 147–394 (GGWRGLREFE…YECFGPHKVV (248 aa)) is reductase. The 106-residue stretch at 150–255 (RGLREFELVE…AAPAGDFFLD (106 aa)) folds into the FAD-binding FR-type domain. Residues Y188 and 204–207 (RQYS) each bind FAD. Residue 268–273 (GVGLTP) coordinates NADP(+). 387–390 (CFGP) is a binding site for FAD.

The protein belongs to the globin family. Two-domain flavohemoproteins subfamily. In the C-terminal section; belongs to the flavoprotein pyridine nucleotide cytochrome reductase family. Heme b is required as a cofactor. It depends on FAD as a cofactor.

The enzyme catalyses 2 nitric oxide + NADPH + 2 O2 = 2 nitrate + NADP(+) + H(+). It catalyses the reaction 2 nitric oxide + NADH + 2 O2 = 2 nitrate + NAD(+) + H(+). Is involved in NO detoxification in an aerobic process, termed nitric oxide dioxygenase (NOD) reaction that utilizes O(2) and NAD(P)H to convert NO to nitrate, which protects the bacterium from various noxious nitrogen compounds. Therefore, plays a central role in the inducible response to nitrosative stress. The polypeptide is Flavohemoprotein (Vibrio vulnificus (strain YJ016)).